Consider the following 239-residue polypeptide: 2',3'-cyclic-nucleotide 3'-phosphodiesterase (239 aa).

Residues His-39 and His-150 each act as proton donor/acceptor in the active site.

It belongs to the 2H phosphoesterase superfamily. CPD1 family.

It is found in the golgi apparatus. It catalyses the reaction ADP-alpha-D-ribose 1'',2''-cyclic phosphate + H2O = ADP-alpha-D-ribose 1''-phosphate + H(+). The catalysed reaction is 2',3'-cyclophospho-AMP + H2O = adenosine 2'-phosphate + H(+). The enzyme catalyses 2',3'-cyclophospho-GMP + H2O = guanosine 2'-phosphate + H(+). It carries out the reaction 2',3'-cyclophospho-UMP + H2O = uridine 2'-phosphate + H(+). It catalyses the reaction 2',3'-cyclophospho-CMP + H2O = cytidine 2'-phosphate + H(+). The catalysed reaction is a nucleoside 2',3'-cyclic phosphate + H2O = a nucleoside 2'-phosphate + H(+). Functionally, involved in the metabolism of ADP-ribose 1',2'-cyclic phosphate which is produced as a consequence of tRNA splicing. This is 2',3'-cyclic-nucleotide 3'-phosphodiesterase from Saccharomyces cerevisiae (strain ATCC 204508 / S288c) (Baker's yeast).